A 406-amino-acid polypeptide reads, in one-letter code: Cysteine desulfurase (406 aa).

The residue at position 226 (Lys226) is an N6-(pyridoxal phosphate)lysine. Catalysis depends on Cys364, which acts as the Cysteine persulfide intermediate.

It belongs to the class-V pyridoxal-phosphate-dependent aminotransferase family. Csd subfamily. In terms of assembly, homodimer. Interacts with SufE and the SufBCD complex composed of SufB, SufC and SufD. The interaction with SufE is required to mediate the direct transfer of the sulfur atom from the S-sulfanylcysteine. Requires pyridoxal 5'-phosphate as cofactor.

The protein localises to the cytoplasm. It catalyses the reaction (sulfur carrier)-H + L-cysteine = (sulfur carrier)-SH + L-alanine. It carries out the reaction L-selenocysteine + AH2 = hydrogenselenide + L-alanine + A + H(+). It participates in cofactor biosynthesis; iron-sulfur cluster biosynthesis. In terms of biological role, cysteine desulfurases mobilize the sulfur from L-cysteine to yield L-alanine, an essential step in sulfur metabolism for biosynthesis of a variety of sulfur-containing biomolecules. Component of the suf operon, which is activated and required under specific conditions such as oxidative stress and iron limitation. Acts as a potent selenocysteine lyase in vitro, that mobilizes selenium from L-selenocysteine. Selenocysteine lyase activity is however unsure in vivo. This is Cysteine desulfurase from Escherichia coli O127:H6 (strain E2348/69 / EPEC).